Consider the following 126-residue polypeptide: Anti-adapter protein IraD (126 aa).

It belongs to the GpW/Gp25 family. IraD subfamily. In terms of assembly, interacts with RssB.

The protein resides in the cytoplasm. Functionally, inhibits RpoS proteolysis by regulating RssB activity, thereby increasing the stability of the sigma stress factor RpoS during oxidative stress. Its effect on RpoS stability is due to its interaction with RssB, which probably blocks the interaction of RssB with RpoS, and the consequent delivery of the RssB-RpoS complex to the ClpXP protein degradation pathway. The sequence is that of Anti-adapter protein IraD from Salmonella enteritidis PT4 (strain P125109).